A 319-amino-acid chain; its full sequence is Protein sprouty homolog 1 (319 aa).

An N-acetylmethionine modification is found at M1. 2 disordered regions span residues 54 to 78 (TEGP…ERTH) and 100 to 160 (AVLP…QPKQ). A compositionally biased stretch (basic and acidic residues) spans 69–78 (PRQEKHERTH). Positions 112–131 (SRSTSTGSAASSGSNSSASS) are enriched in low complexity. Residues 183–295 (QCGKCKCGEC…CYDWIHRPGC (113 aa)) enclose the SPR domain.

Belongs to the sprouty family. As to quaternary structure, forms heterodimers with SPRY2. Interacts with TESK1. Interacts with CAV1 (via C-terminus).

The protein resides in the cytoplasm. It is found in the membrane. Its function is as follows. Inhibits fibroblast growth factor (FGF)-induced retinal lens fiber differentiation, probably by inhibiting FGF-mediated phosphorylation of ERK1/2. Inhibits TGFB-induced epithelial-to-mesenchymal transition in lens epithelial cells. The sequence is that of Protein sprouty homolog 1 (SPRY1) from Homo sapiens (Human).